The sequence spans 264 residues: tRNA pseudouridine synthase A (264 aa).

The active-site Nucleophile is the D51. Y109 lines the substrate pocket.

This sequence belongs to the tRNA pseudouridine synthase TruA family. Homodimer.

It carries out the reaction uridine(38/39/40) in tRNA = pseudouridine(38/39/40) in tRNA. In terms of biological role, formation of pseudouridine at positions 38, 39 and 40 in the anticodon stem and loop of transfer RNAs. This is tRNA pseudouridine synthase A from Polaromonas naphthalenivorans (strain CJ2).